Reading from the N-terminus, the 158-residue chain is Endoribonuclease YbeY (158 aa).

Zn(2+) contacts are provided by H124, H128, and H134.

It belongs to the endoribonuclease YbeY family. Requires Zn(2+) as cofactor.

The protein resides in the cytoplasm. In terms of biological role, single strand-specific metallo-endoribonuclease involved in late-stage 70S ribosome quality control and in maturation of the 3' terminus of the 16S rRNA. In Caldicellulosiruptor saccharolyticus (strain ATCC 43494 / DSM 8903 / Tp8T 6331), this protein is Endoribonuclease YbeY.